Here is a 573-residue protein sequence, read N- to C-terminus: MRTENTATLNLIWGALILEELARIGVQHVCMAPGSRSTPLTLAAAQQTKLKRHLHFDERGLGFMALGLAKASRAPVAIITTSGTAVANLYPAIVEAWLTHVPLIVLSGDRPPELLDCGANQAIVQPGIFAHYAKQINLPTPDAHIAPQALLTTIDEAVANQTRPVHINCMYREPLYPSELGTPILDTESPYLKPLQTWLQLSRPYTQYGKYKQVSNPSDDAIMRFVHGKGVIVAGTLTPEQDPQQLIALSQKIGWPLLTDAQSQLRQHPAAIGNIDQLLQHPKARNLLQEADRVLVFGGRLLSKRLISYLAEQHWHSYWQVLPEQNRLDPSHNAKHVWHANAAQFTALNWYRSSSANWANTLITYNDELHNLFVRNIDHGEFGEAQVVRAIANTRPLEQQLFIGNSLPVRLYDMYAPVSCCTATTYTNRGASGIDGLLATACGLAAHEGKPTSLIIGDLSQLHDLNSLAIAKSLASPLVIVILNNDGGNIFNLLPVPNEQVRNDYYRLSHGLEFGYAAAMFNLPYNQVDNLADFQDSYNEALDFQGASIIEVNVSQTQASDQIAELNLWVKQS.

Belongs to the TPP enzyme family. MenD subfamily. In terms of assembly, homodimer. The cofactor is Mg(2+). Mn(2+) serves as cofactor. Requires thiamine diphosphate as cofactor.

The enzyme catalyses isochorismate + 2-oxoglutarate + H(+) = 5-enolpyruvoyl-6-hydroxy-2-succinyl-cyclohex-3-ene-1-carboxylate + CO2. It functions in the pathway quinol/quinone metabolism; 1,4-dihydroxy-2-naphthoate biosynthesis; 1,4-dihydroxy-2-naphthoate from chorismate: step 2/7. Its pathway is quinol/quinone metabolism; menaquinone biosynthesis. Catalyzes the thiamine diphosphate-dependent decarboxylation of 2-oxoglutarate and the subsequent addition of the resulting succinic semialdehyde-thiamine pyrophosphate anion to isochorismate to yield 2-succinyl-5-enolpyruvyl-6-hydroxy-3-cyclohexene-1-carboxylate (SEPHCHC). The polypeptide is 2-succinyl-5-enolpyruvyl-6-hydroxy-3-cyclohexene-1-carboxylate synthase (Shewanella sp. (strain W3-18-1)).